The chain runs to 236 residues: 2-C-methyl-D-erythritol 4-phosphate cytidylyltransferase (236 aa).

The protein belongs to the IspD/TarI cytidylyltransferase family. IspD subfamily.

The enzyme catalyses 2-C-methyl-D-erythritol 4-phosphate + CTP + H(+) = 4-CDP-2-C-methyl-D-erythritol + diphosphate. It participates in isoprenoid biosynthesis; isopentenyl diphosphate biosynthesis via DXP pathway; isopentenyl diphosphate from 1-deoxy-D-xylulose 5-phosphate: step 2/6. Catalyzes the formation of 4-diphosphocytidyl-2-C-methyl-D-erythritol from CTP and 2-C-methyl-D-erythritol 4-phosphate (MEP). The protein is 2-C-methyl-D-erythritol 4-phosphate cytidylyltransferase of Burkholderia pseudomallei (strain 1106a).